The chain runs to 557 residues: Formate--tetrahydrofolate ligase (557 aa).

Residue Thr65–Thr72 coordinates ATP.

The protein belongs to the formate--tetrahydrofolate ligase family.

The catalysed reaction is (6S)-5,6,7,8-tetrahydrofolate + formate + ATP = (6R)-10-formyltetrahydrofolate + ADP + phosphate. It participates in one-carbon metabolism; tetrahydrofolate interconversion. This chain is Formate--tetrahydrofolate ligase, found in Methylococcus capsulatus (strain ATCC 33009 / NCIMB 11132 / Bath).